Here is a 614-residue protein sequence, read N- to C-terminus: V-type proton ATPase catalytic subunit A isoform 2 (614 aa).

Residue serine 142 is modified to Phosphoserine. Residue 247–254 coordinates ATP; sequence GAFGCGKT.

This sequence belongs to the ATPase alpha/beta chains family. As to quaternary structure, V-ATPase is a heteromultimeric enzyme made up of two complexes: the ATP-hydrolytic V1 complex and the proton translocation V0 complex. The V1 complex consists of three catalytic AB heterodimers that form a heterohexamer, three peripheral stalks each consisting of EG heterodimers, one central rotor including subunits D and F, and the regulatory subunits C and H. The proton translocation complex V0 consists of the proton transport subunit a, a ring of proteolipid subunits c9c'', rotary subunit d, subunits e and f, and the accessory subunits VhaAC45 and ATP6AP2.

The catalysed reaction is ATP + H2O + 4 H(+)(in) = ADP + phosphate + 5 H(+)(out). With respect to regulation, ATP hydrolysis occurs at the interface between the nucleotide-binding domains of subunits A and B. ATP hydrolysis triggers a conformational change in the subunits D and F, which induces a shift of subunit d. The c-ring is subsequently rotated and results in a continuous proton translocation across the membrane. Its function is as follows. Catalytic subunit of the V1 complex of vacuolar(H+)-ATPase (V-ATPase), a multisubunit enzyme composed of a peripheral complex (V1) that hydrolyzes ATP and a membrane integral complex (V0) that translocates protons. V-ATPase is responsible for acidifying and maintaining the pH of intracellular compartments and in some cell types, is targeted to the plasma membrane, where it is responsible for acidifying the extracellular environment. The chain is V-type proton ATPase catalytic subunit A isoform 2 (Vha68-2) from Drosophila melanogaster (Fruit fly).